Here is a 473-residue protein sequence, read N- to C-terminus: Argininosuccinate lyase (473 aa).

Belongs to the lyase 1 family. Argininosuccinate lyase subfamily.

It localises to the cytoplasm. It catalyses the reaction 2-(N(omega)-L-arginino)succinate = fumarate + L-arginine. It participates in amino-acid biosynthesis; L-arginine biosynthesis; L-arginine from L-ornithine and carbamoyl phosphate: step 3/3. In Chelativorans sp. (strain BNC1), this protein is Argininosuccinate lyase.